Here is a 77-residue protein sequence, read N- to C-terminus: Small ribosomal subunit protein uS17 (77 aa).

Belongs to the universal ribosomal protein uS17 family. Part of the 30S ribosomal subunit.

One of the primary rRNA binding proteins, it binds specifically to the 5'-end of 16S ribosomal RNA. This is Small ribosomal subunit protein uS17 from Rickettsia canadensis (strain McKiel).